We begin with the raw amino-acid sequence, 612 residues long: Peroxisomal targeting signal receptor (612 aa).

An N-acetylmethionine modification is found at Met-1. The segment at 1-24 is disordered; the sequence is MDVGSCSVGNNPLAQLHKHTQQNK. A Glycyl cysteine thioester (Cys-Gly) (interchain with G-Cter in ubiquitin) cross-link involves residue Cys-6. Residues 7-29 form an amphipathic helix 1 (AH1) region; sequence SVGNNPLAQLHKHTQQNKSLQFN. Residues Lys-18 and Lys-24 each participate in a glycyl lysine isopeptide (Lys-Gly) (interchain with G-Cter in ubiquitin) cross-link. Phosphoserine is present on Ser-61. The stretch at 64-97 is one TPR 1 repeat; it reads NMANMQRFINGEPLIDDKRRMEIGPSSGRLPPFS. The tract at residues 70–104 is amphipathic helix 2 (AH2); sequence RFINGEPLIDDKRRMEIGPSSGRLPPFSNVHSLQT. Positions 120–124 match the WxxxF/Y motif 1 motif; the sequence is WSQEF. A disordered region spans residues 129–151; it reads SIQNRNADTGNSEKAWQRGSTTA. An amphipathic helix 3 (AH3) region spans residues 158–174; it reads PNTMMNNYAYASMNSLS. A disordered region spans residues 182–202; that stretch reads AFMNQQQSGRSKEGVNEQEQQ. The WxxxF/Y motif 2 motif lies at 204 to 208; it reads WTDQF. The interval 257–273 is amphipathic helix 4 (AH4); sequence FQEVWDSIHKDAEEVLP. TPR repeat units follow at residues 313–346, 347–380, 381–418, 419–456, 457–490, 491–524, and 525–558; these read PNAY…KPDH, VDAW…DPKN, LEAM…IWSR, IKQQ…STID, PEIQ…NPND, ELMW…KPSF, and VRAR…HEVN.

This sequence belongs to the peroxisomal targeting signal receptor family. As to quaternary structure, interacts (via WxxxF/Y and LVxEF motifs) with PEX14; promoting translocation through the PEX13-PEX14 docking complex. Post-translationally, monoubiquitinated at Cys-6 by PEX2 during PEX5 passage through the retrotranslocation channel: monoubiquitination acts as a signal for PEX5 extraction and is required for proper export from peroxisomes and recycling. Ubiquitination at Cys-6 is UBC4-independent but requires the presence of PEX4. When PEX5 recycling is compromised, polyubiquitinated at Lys-18 and Lys-24 by PEX10 during its passage through the retrotranslocation channel, leading to its degradation. Ubiquitination at Lys-18 and Lys-24 are UBC4-dependent. Monoubiquitination at Cys-6 and polyubiquitination at Lys-18 and Lys-24 are removed by UBP15 in the cytosol, resetting PEX5 for a subsequent import cycle.

The protein localises to the cytoplasm. Its subcellular location is the cytosol. It is found in the peroxisome matrix. Its function is as follows. Receptor that mediates peroxisomal import of proteins containing a C-terminal PTS1-type tripeptide peroxisomal targeting signal (SKL-type). Binds to cargo proteins containing a PTS1 peroxisomal targeting signal in the cytosol, and translocates them into the peroxisome matrix by passing through the PEX13-PEX14 docking complex along with cargo proteins. PEX5 receptor is then retrotranslocated into the cytosol, leading to release of bound cargo in the peroxisome matrix, and reset for a subsequent peroxisome import cycle. The chain is Peroxisomal targeting signal receptor from Saccharomyces cerevisiae (strain ATCC 204508 / S288c) (Baker's yeast).